The sequence spans 138 residues: Putative pre-16S rRNA nuclease (138 aa).

It belongs to the YqgF nuclease family.

It is found in the cytoplasm. In terms of biological role, could be a nuclease involved in processing of the 5'-end of pre-16S rRNA. The chain is Putative pre-16S rRNA nuclease from Listeria monocytogenes serotype 4b (strain CLIP80459).